The following is a 72-amino-acid chain: Putative membrane protein insertion efficiency factor (72 aa).

The protein belongs to the UPF0161 family.

It localises to the cell inner membrane. In terms of biological role, could be involved in insertion of integral membrane proteins into the membrane. In Amoebophilus asiaticus (strain 5a2), this protein is Putative membrane protein insertion efficiency factor.